The primary structure comprises 78 residues: Acyl carrier protein (78 aa).

Residues 2 to 77 (SEIASRVKAI…DAVSYIEEHA (76 aa)) form the Carrier domain. The residue at position 37 (Ser-37) is an O-(pantetheine 4'-phosphoryl)serine.

It belongs to the acyl carrier protein (ACP) family. In terms of processing, 4'-phosphopantetheine is transferred from CoA to a specific serine of apo-ACP by AcpS. This modification is essential for activity because fatty acids are bound in thioester linkage to the sulfhydryl of the prosthetic group.

It is found in the cytoplasm. The protein operates within lipid metabolism; fatty acid biosynthesis. In terms of biological role, carrier of the growing fatty acid chain in fatty acid biosynthesis. The protein is Acyl carrier protein of Bacteroides thetaiotaomicron (strain ATCC 29148 / DSM 2079 / JCM 5827 / CCUG 10774 / NCTC 10582 / VPI-5482 / E50).